The following is a 464-amino-acid chain: ATP synthase subunit beta (464 aa).

An ATP-binding site is contributed by 151-158 (GGAGVGKT).

The protein belongs to the ATPase alpha/beta chains family. In terms of assembly, F-type ATPases have 2 components, CF(1) - the catalytic core - and CF(0) - the membrane proton channel. CF(1) has five subunits: alpha(3), beta(3), gamma(1), delta(1), epsilon(1). CF(0) has three main subunits: a(1), b(2) and c(9-12). The alpha and beta chains form an alternating ring which encloses part of the gamma chain. CF(1) is attached to CF(0) by a central stalk formed by the gamma and epsilon chains, while a peripheral stalk is formed by the delta and b chains.

It is found in the cell membrane. It carries out the reaction ATP + H2O + 4 H(+)(in) = ADP + phosphate + 5 H(+)(out). In terms of biological role, produces ATP from ADP in the presence of a proton gradient across the membrane. The catalytic sites are hosted primarily by the beta subunits. This Clostridium kluyveri (strain ATCC 8527 / DSM 555 / NBRC 12016 / NCIMB 10680 / K1) protein is ATP synthase subunit beta.